We begin with the raw amino-acid sequence, 524 residues long: MQTSMIAAIYKNFLGHAPDWYKKTIIAFLIVNPFIFMVDPYIAGWTLVIQFIFTLAMALKCYPLQPGGLLLIEAMFIGMTSPGHMMHEIEVNLEVLLLLVFMVAGIYFMKDLLMFLFTKLVIKVRNKLILSLSFIFASAFLSAFLDALTVVAVIISVGLGFYSIYHKVASGKEFHSDHDHTSDDELGSHDLEDFRAFLRNLMMHSAVGTALGGVMTMVGEPQNLIIADKAGWDFVEFFIRMAPVTLPVFVFGLLTTVVLEKTGTFSYGAKLPSAVRQILVDYNDHMDKGRSKRETAKLVVQALIGIWLIVGLATHMASVGLIGLSVIVLATSMSGVIEEHALGKAFEEALPFTALLCVFFGVVAVIIDQGLFQPVIHWVLSFEGETQMVMFYLANGVLSMVSDNVFVGSVYITEVTAALEAGQITRDQYDMLAVAINTGTNLPSVATPNGQAAFLFLLTSAIAPLLRLSYGRMVMMALPYTIVLTIVGLVATYIGLADATQVLYDMHLIEHHTAVEAGAQAVGH.

9 helical membrane passes run 25 to 45 (IIAFLIVNPFIFMVDPYIAGW), 97 to 117 (LLLVFMVAGIYFMKDLLMFLF), 135 to 155 (IFASAFLSAFLDALTVVAVII), 234 to 254 (FVEFFIRMAPVTLPVFVFGLL), 302 to 322 (ALIGIWLIVGLATHMASVGLI), 352 to 372 (FTALLCVFFGVVAVIIDQGLF), 388 to 408 (MVMFYLANGVLSMVSDNVFVG), 445 to 465 (VATPNGQAAFLFLLTSAIAPL), and 474 to 494 (VMMALPYTIVLTIVGLVATYI).

The protein belongs to the NhaB Na(+)/H(+) (TC 2.A.34) antiporter family.

It localises to the cell inner membrane. The catalysed reaction is 2 Na(+)(in) + 3 H(+)(out) = 2 Na(+)(out) + 3 H(+)(in). Na(+)/H(+) antiporter that extrudes sodium in exchange for external protons. In Alteromonas mediterranea (strain DSM 17117 / CIP 110805 / LMG 28347 / Deep ecotype), this protein is Na(+)/H(+) antiporter NhaB.